The following is a 1007-amino-acid chain: Ephrin type-A receptor 10 (1007 aa).

The first 22 residues, 1 to 22, serve as a signal peptide directing secretion; it reads METGAGPHPLRLFVCLIPLCLA. Residues 23–565 lie on the Extracellular side of the membrane; sequence LLLGPGRPGT…APGSRDQSPA (543 aa). In terms of domain architecture, Eph LBD spans 35-216; the sequence is EVILLDSKAS…YYKQCRATVR (182 aa). A glycan (N-linked (GlcNAc...) asparagine) is linked at Asn311. Disordered stretches follow at residues 323–343 and 467–486; these read ARSP…APRD and PQSV…PGTN. 2 Fibronectin type-III domains span residues 340-452 and 456-554; these read APRD…TGPG and EEDE…TPGE. Residue Asn486 is glycosylated (N-linked (GlcNAc...) asparagine). The helical transmembrane segment at 566-586 threads the bilayer; it reads VVVTVVTISALLVLGSVMSVL. The Cytoplasmic portion of the chain corresponds to 587–1007; sequence AIWRRPCDGK…LQLQGQGVQV (421 aa). A Protein kinase domain is found at 644–899; sequence VTLEKSLGAG…PRFSQIHSIL (256 aa). The 65-residue stretch at 932–996 folds into the SAM domain; the sequence is PSFGSVGAWL…LSGISALQTR (65 aa).

It belongs to the protein kinase superfamily. Tyr protein kinase family. Ephrin receptor subfamily. As to expression, expressed in the cochlea, in the organ of Corti, spiral ganglion, and stria vascularis.

The protein resides in the cell membrane. The enzyme catalyses L-tyrosyl-[protein] + ATP = O-phospho-L-tyrosyl-[protein] + ADP + H(+). Its function is as follows. Receptor for members of the ephrin-A family. Binds to EFNA3, EFNA4 and EFNA5. The sequence is that of Ephrin type-A receptor 10 (Epha10) from Mus musculus (Mouse).